A 246-amino-acid chain; its full sequence is Polyhedrin (246 aa).

The protein belongs to the polyhedrin family.

Major component of the virus occlusion bodies, which are large proteinaceous structures (polyhedra), that protect the virus from the outside environment for extended periods until they are ingested by insect larvae. This Lepidoptera (butterflies and moths) protein is Polyhedrin (PH).